The following is a 341-amino-acid chain: UDP-3-O-acylglucosamine N-acyltransferase (341 aa).

Histidine 241 functions as the Proton acceptor in the catalytic mechanism.

This sequence belongs to the transferase hexapeptide repeat family. LpxD subfamily. As to quaternary structure, homotrimer.

It carries out the reaction a UDP-3-O-[(3R)-3-hydroxyacyl]-alpha-D-glucosamine + a (3R)-hydroxyacyl-[ACP] = a UDP-2-N,3-O-bis[(3R)-3-hydroxyacyl]-alpha-D-glucosamine + holo-[ACP] + H(+). It functions in the pathway bacterial outer membrane biogenesis; LPS lipid A biosynthesis. Its function is as follows. Catalyzes the N-acylation of UDP-3-O-acylglucosamine using 3-hydroxyacyl-ACP as the acyl donor. Is involved in the biosynthesis of lipid A, a phosphorylated glycolipid that anchors the lipopolysaccharide to the outer membrane of the cell. In Saccharophagus degradans (strain 2-40 / ATCC 43961 / DSM 17024), this protein is UDP-3-O-acylglucosamine N-acyltransferase.